Consider the following 588-residue polypeptide: Adenine deaminase (588 aa).

It belongs to the metallo-dependent hydrolases superfamily. Adenine deaminase family. In terms of assembly, homodimer. Requires Mn(2+) as cofactor.

The catalysed reaction is adenine + H2O + H(+) = hypoxanthine + NH4(+). This Escherichia coli (strain K12 / DH10B) protein is Adenine deaminase.